We begin with the raw amino-acid sequence, 712 residues long: Capsid protein (712 aa).

Disordered stretches follow at residues 614–633 (LTSTEEGSPQKKKRRDKEVR) and 646–665 (CWMSPTPETPPKAGKTPESS). Residues 670 to 706 (YDNHTKLAKRVKKEIHNQNRRHRLLLAHLRRERDRLL) adopt a coiled-coil conformation.

The protein belongs to the anelloviridae capsid protein family.

It is found in the virion. In terms of biological role, self-assembles to form an icosahedral capsid with a T=1 symmetry, about 30 nm in diameter, and consisting of 60 capsid proteins. The capsid encapsulates the genomic DNA. Capsid protein is involved in attachment and entry into the host cell. This chain is Capsid protein, found in Torque teno tamarin virus (isolate So-TTV2).